The primary structure comprises 263 residues: MKKIHPSAVIEEGAQLGDDVVIEAYAYVGKDTKIGNDVVIKQGARILSDTTIGDHSRVFSYAIVGDIPQDISYKEEQKSGVVIGKNATIREFATINSGTAKGDGFTRIGDNAFIMAYCHIAHDCLLGNNIILANNATLAGHVELGDFTVVGGLTPIHQFVKVGEGCMIAGASALSQDIVPFCLAEGNRASIRSLNLVGIRRRFDKDEVDRLSRAFKTLFRQGDLKENAKNLLENQESENVKKMCHFILETKRGIPVYRGKNNA.

This sequence belongs to the transferase hexapeptide repeat family. LpxA subfamily. As to quaternary structure, homotrimer.

The protein localises to the cytoplasm. The catalysed reaction is a (3R)-hydroxyacyl-[ACP] + UDP-N-acetyl-alpha-D-glucosamine = a UDP-3-O-[(3R)-3-hydroxyacyl]-N-acetyl-alpha-D-glucosamine + holo-[ACP]. Its pathway is glycolipid biosynthesis; lipid IV(A) biosynthesis; lipid IV(A) from (3R)-3-hydroxytetradecanoyl-[acyl-carrier-protein] and UDP-N-acetyl-alpha-D-glucosamine: step 1/6. Involved in the biosynthesis of lipid A, a phosphorylated glycolipid that anchors the lipopolysaccharide to the outer membrane of the cell. The polypeptide is Acyl-[acyl-carrier-protein]--UDP-N-acetylglucosamine O-acyltransferase (Campylobacter jejuni subsp. jejuni serotype O:6 (strain 81116 / NCTC 11828)).